Reading from the N-terminus, the 122-residue chain is Large ribosomal subunit protein uL14 (122 aa).

The protein belongs to the universal ribosomal protein uL14 family. As to quaternary structure, part of the 50S ribosomal subunit. Forms a cluster with proteins L3 and L19. In the 70S ribosome, L14 and L19 interact and together make contacts with the 16S rRNA in bridges B5 and B8.

Binds to 23S rRNA. Forms part of two intersubunit bridges in the 70S ribosome. In Leifsonia xyli subsp. xyli (strain CTCB07), this protein is Large ribosomal subunit protein uL14.